Here is a 902-residue protein sequence, read N- to C-terminus: Adhesion G-protein coupled receptor D1 (902 aa).

Residues 1 to 25 form the signal peptide; sequence MKKLLPLCCWHSWLLLFYCDFQVRG. Residues 26-598 lie on the Extracellular side of the membrane; the sequence is AHTRSHVHPG…GHQVALSSIS (573 aa). 15 N-linked (GlcNAc...) asparagine glycosylation sites follow: N68, N76, N83, N89, N121, N183, N217, N310, N330, N337, N347, N422, N504, N529, and N561. In terms of domain architecture, Pentraxin (PTX) spans 111–304; sequence KGVTFLYYRK…VNTMAPTNAY (194 aa). One can recognise a GAIN-B domain in the interval 399 to 585; sequence QVAIVGSSSM…AILMQVVPLE (187 aa). 2 disulfide bridges follow: C538–C567 and C555–C569. The interval 538 to 585 is GPS; the sequence is CAFLDFSSGEGIWSNQGCALTEGNLSYSICRCTHLTNFAILMQVVPLE. Residues 574-582 are stachel; the sequence is NFAILMQVV. Q591 contributes to the 17beta-hydroxy-5alpha-androstan-3-one binding site. A helical membrane pass occupies residues 599-619; that stretch reads YIGCSLSVLCLAITLVTFAVL. The Cytoplasmic portion of the chain corresponds to 620–630; the sequence is SSVSTIRNQRY. A helical transmembrane segment spans residues 631–651; the sequence is HIHANLSCAVLVAQVLLLISF. The Extracellular segment spans residues 652–661; sequence RFEPGTAPCQ. A disulfide bond links C660 and C732. Residues 662–682 form a helical membrane-spanning segment; that stretch reads VLAMLLHYFFLSAFAWMLVEG. Topologically, residues 683–702 are cytoplasmic; that stretch reads LHLYSMVIKVFGSEDSKHRY. The chain crosses the membrane as a helical span at residues 703–723; the sequence is YYGIGWGFPLLICIISIVFAM. At 724 to 739 the chain is on the extracellular side; that stretch reads DSYGTSKNCWLSLGNG. Residues 740-760 traverse the membrane as a helical segment; the sequence is AIWAFVAPALFIIVVNIGILI. Topologically, residues 761-788 are cytoplasmic; the sequence is AVTRVISQISAENYKIHGDPSAFKLTAK. The helical transmembrane segment at 789–809 threads the bilayer; the sequence is AVAVLLPILGTSWVFGVLAVN. Residues 810–812 are Extracellular-facing; it reads NQA. A helical transmembrane segment spans residues 813 to 833; the sequence is MVFQYMFAILNSLQGFFIFLF. The Cytoplasmic portion of the chain corresponds to 834–902; the sequence is HCLLNSEVRA…SGHRVDLSAV (69 aa). Residues 865-902 form a disordered region; it reads KPFSSDIMNGTRPATGSTRLSPWDKSSHSGHRVDLSAV. Residues 870 to 884 show a composition bias toward polar residues; that stretch reads DIMNGTRPATGSTRL. Basic and acidic residues predominate over residues 889 to 902; it reads KSSHSGHRVDLSAV.

Belongs to the G-protein coupled receptor 2 family. Adhesion G-protein coupled receptor (ADGR) subfamily. As to quaternary structure, heterodimer of 2 chains generated by proteolytic processing; the large extracellular N-terminal fragment and the membrane-bound C-terminal fragment predominantly remain associated and non-covalently linked. Interacts with ESYT1; interaction takes place in absence of cytosolic calcium and inhibits the G protein-coupled receptor activity of ADGRD1. In terms of processing, autoproteolytically processed at the GPS region of the GAIN-B domain; this cleavage modulates receptor activity. Cleavage takes place early in the secretory pathway before N-glycosylation.

It localises to the cell membrane. Forms a heterodimer of 2 chains generated by proteolytic processing that remain associated through non-covalent interactions mediated by the GAIN-B domain. In the inactivated receptor, the Stachel sequence (also named stalk) is embedded in the GAIN-B domain, where it adopts a beta-strand conformation. On activation, the Stachel moves into the 7 transmembrane region and adopts a twisted hook-shaped configuration that forms contacts within the receptor, leading to coupling of a G-alpha protein, which activates signaling. The cleaved GAIN-B and N-terminal domains can then dissociate from the rest of the receptor. Interaction with ESYT1 in absence of cytosolic calcium inhibits the G protein-coupled receptor activity; interaction and inhibition is relieved when cytosolic calcium increases. In terms of biological role, adhesion G-protein coupled receptor (aGPCR) for androgen hormone 5alpha-dihydrotestosterone (5alpha-DHT), also named 17beta-hydroxy-5alpha-androstan-3-one, the most potent hormone among androgens. Also activated by methenolone drug. Ligand binding causes a conformation change that triggers signaling via guanine nucleotide-binding proteins (G proteins) and modulates the activity of downstream effectors, such as adenylate cyclase. ADGRD1 is coupled to G(s) G proteins and mediates activation of adenylate cyclase activity. Acts as a 5alpha-DHT receptor in muscle cells, thereby increasing intracellular cyclic AMP (cAMP) levels and enhancing muscle strength. The polypeptide is Adhesion G-protein coupled receptor D1 (ADGRD1) (Bos taurus (Bovine)).